Reading from the N-terminus, the 20-residue chain is Agglutinin beta-1 chain (20 aa).

A compositionally biased stretch (polar residues) spans 1-11; it reads NEQSGKSQTVI. Residues 1–20 are disordered; sequence NEQSGKSQTVIVGSWGAKVS.

It belongs to the jacalin lectin family. As to quaternary structure, tetramer of four alpha chains associated with two or four beta chains.

Functionally, D-galactose-specific lectin, binds the T-antigen structure Gal-beta1,3-GalNAc (Thomsen-Friedenreich-antigen-specific lectin). Potent and selective stimulant of distinct T- and B-cell functions. Shows a unique ability to specifically recognize IgA-1 from human serum. The protein is Agglutinin beta-1 chain of Artocarpus integer (Jack fruit).